The primary structure comprises 625 residues: Threonine--tRNA ligase (625 aa).

Residues 1–147 (MRMLLIHSDY…TIVPEEAKVE (147 aa)) form an editing domain region. Residues 206-505 (PHVRLMLEHE…MQEGKKPMFP (300 aa)) are catalytic. Zn(2+) contacts are provided by Cys-298, His-350, and His-474.

The protein belongs to the class-II aminoacyl-tRNA synthetase family. In terms of assembly, homodimer. Zn(2+) is required as a cofactor.

It is found in the cytoplasm. The enzyme catalyses tRNA(Thr) + L-threonine + ATP = L-threonyl-tRNA(Thr) + AMP + diphosphate + H(+). Functionally, catalyzes the attachment of threonine to tRNA(Thr) in a two-step reaction: L-threonine is first activated by ATP to form Thr-AMP and then transferred to the acceptor end of tRNA(Thr). Also edits incorrectly charged L-seryl-tRNA(Thr). This chain is Threonine--tRNA ligase, found in Pyrococcus furiosus (strain ATCC 43587 / DSM 3638 / JCM 8422 / Vc1).